We begin with the raw amino-acid sequence, 369 residues long: RING-H2 finger protein ATL47 (369 aa).

Residues 52–72 (IILFIIVLLSVIFFICSILHL) form a helical membrane-spanning segment. The RING-type; atypical zinc-finger motif lies at 144–186 (CAVCLCEFSEDDKLRLLPNCSHAFHIDCIDTWLLSNSTCPLCR). Residues 332-355 (NNHPSETNLVVGGSSSSSSYVCSG) are disordered. Positions 341–355 (VVGGSSSSSSYVCSG) are enriched in low complexity.

Belongs to the RING-type zinc finger family. ATL subfamily.

Its subcellular location is the membrane. The enzyme catalyses S-ubiquitinyl-[E2 ubiquitin-conjugating enzyme]-L-cysteine + [acceptor protein]-L-lysine = [E2 ubiquitin-conjugating enzyme]-L-cysteine + N(6)-ubiquitinyl-[acceptor protein]-L-lysine.. Its pathway is protein modification; protein ubiquitination. This is RING-H2 finger protein ATL47 (ATL47) from Arabidopsis thaliana (Mouse-ear cress).